Consider the following 288-residue polypeptide: Urease accessory protein UreD 1 (288 aa).

Residues 1 to 10 (MHGPLAPAPS) are compositionally biased toward pro residues. A disordered region spans residues 1 to 35 (MHGPLAPAPSPERLGAAPARQRSDGRIRLRVGPAR).

It belongs to the UreD family. In terms of assembly, ureD, UreF and UreG form a complex that acts as a GTP-hydrolysis-dependent molecular chaperone, activating the urease apoprotein by helping to assemble the nickel containing metallocenter of UreC. The UreE protein probably delivers the nickel.

It is found in the cytoplasm. In terms of biological role, required for maturation of urease via the functional incorporation of the urease nickel metallocenter. This chain is Urease accessory protein UreD 1, found in Methylobacterium radiotolerans (strain ATCC 27329 / DSM 1819 / JCM 2831 / NBRC 15690 / NCIMB 10815 / 0-1).